The primary structure comprises 587 residues: Calcium/calmodulin-dependent protein kinase kinase 2 (587 aa).

Over residues 1–11 (MSSCVSSQPTS) the composition is skewed to polar residues. Disordered stretches follow at residues 1–32 (MSSC…SQKP) and 74–115 (EADG…SSLD). Ser2 is modified (N-acetylserine). Phosphoserine occurs at positions 99, 113, 128, 132, and 136. Residues 101-115 (QERSQGGPASSSSLD) are compositionally biased toward polar residues. The region spanning 164 to 445 (YTLKDEIGKG…VPEIKLHPWV (282 aa)) is the Protein kinase domain. ATP is bound by residues 170–178 (IGKGSYGVV) and Lys193. Residues 203–225 (QAGFPRRPPPRGTRPAPGGCIQP) are RP domain. The disordered stretch occupies residues 204-224 (AGFPRRPPPRGTRPAPGGCIQ). The active-site Proton acceptor is the Asp311. The interval 471–476 (ENSVKH) is autoinhibitory domain. Residues 474-499 (VKHIPSLATVILVKTMIRKRSFGNPF) form a calmodulin-binding region. Phosphoserine occurs at positions 494 and 510. The segment at 496–587 (GNPFEGSRRE…QQPEEAMEPE (92 aa)) is disordered. Residues 520-535 (PTREWEPLSEPKEARQ) are compositionally biased toward basic and acidic residues. Over residues 569 to 579 (PGSPPRTPPQQ) the composition is skewed to pro residues. The residue at position 571 (Ser571) is a Phosphoserine.

It belongs to the protein kinase superfamily. Ser/Thr protein kinase family. As to quaternary structure, interacts with calmodulin. Post-translationally, phosphorylated by PKA. Each isoform may show a different pattern of phosphorylation. Autophosphorylated. In terms of tissue distribution, mainly expressed in brain, but detected in all tissues tested (at protein level). In the brain, isoform 1 may be predominant. with high levels in the cerebellum and hippocampus, although isoform 3 is detectable. Isoform 3 is also expressed in lung.

The protein localises to the nucleus. It is found in the cytoplasm. Its subcellular location is the cell projection. It localises to the neuron projection. The catalysed reaction is L-seryl-[protein] + ATP = O-phospho-L-seryl-[protein] + ADP + H(+). It catalyses the reaction L-threonyl-[protein] + ATP = O-phospho-L-threonyl-[protein] + ADP + H(+). With respect to regulation, activated by Ca(2+)/calmodulin. Binding of calmodulin may relieve intrasteric autoinhibition. Autophosphorylation does not alter activity or regulation by Ca(2+)/calmodulin. In part, activity is independent on Ca(2+)/calmodulin. Its function is as follows. Calcium/calmodulin-dependent protein kinase belonging to a proposed calcium-triggered signaling cascade involved in a number of cellular processes. Phosphorylates CAMK1 and CAMK4. Phosphorylates CAMK1D. Seems to be involved in hippocampal activation of CREB1. Efficiently phosphorylates 5'-AMP-activated protein kinase (AMPK) trimer, including that consisting of PRKAA1, PRKAB1 and PRKAG1. This phosphorylation is stimulated in response to Ca(2+) signals. May play a role in neurite growth. Isoform 2 may promote neurite elongation, while isoform 1 may promoter neurite branching. In Rattus norvegicus (Rat), this protein is Calcium/calmodulin-dependent protein kinase kinase 2 (Camkk2).